Reading from the N-terminus, the 468-residue chain is UDP-N-acetylmuramate--L-alanine ligase (468 aa).

An ATP-binding site is contributed by 107 to 113 (GTHGKTT).

This sequence belongs to the MurCDEF family.

The protein localises to the cytoplasm. The catalysed reaction is UDP-N-acetyl-alpha-D-muramate + L-alanine + ATP = UDP-N-acetyl-alpha-D-muramoyl-L-alanine + ADP + phosphate + H(+). Its pathway is cell wall biogenesis; peptidoglycan biosynthesis. Functionally, cell wall formation. In Roseiflexus sp. (strain RS-1), this protein is UDP-N-acetylmuramate--L-alanine ligase.